Reading from the N-terminus, the 494-residue chain is Amidophosphoribosyltransferase (494 aa).

A propeptide spanning residues 1–10 (MFNYSGLNEE) is cleaved from the precursor. The Nucleophile role is filled by Cys-11. Positions 11 to 231 (CGVFGIWNHP…AGEYVVINDK (221 aa)) constitute a Glutamine amidotransferase type-2 domain. Residues Ser-294, Asp-356, and Asp-357 each coordinate Mg(2+).

The protein in the C-terminal section; belongs to the purine/pyrimidine phosphoribosyltransferase family. Mg(2+) serves as cofactor.

The enzyme catalyses 5-phospho-beta-D-ribosylamine + L-glutamate + diphosphate = 5-phospho-alpha-D-ribose 1-diphosphate + L-glutamine + H2O. Its pathway is purine metabolism; IMP biosynthesis via de novo pathway; N(1)-(5-phospho-D-ribosyl)glycinamide from 5-phospho-alpha-D-ribose 1-diphosphate: step 1/2. Its function is as follows. Catalyzes the formation of phosphoribosylamine from phosphoribosylpyrophosphate (PRPP) and glutamine. The chain is Amidophosphoribosyltransferase from Staphylococcus aureus (strain COL).